Reading from the N-terminus, the 725-residue chain is IML2-like protein SCY_3392 (725 aa).

At Thr-196 the chain carries Phosphothreonine. Residues Ser-246, Ser-377, and Ser-380 each carry the phosphoserine modification.

This sequence belongs to the IML2 family.

It localises to the cytoplasm. The protein resides in the nucleus. Functionally, may be involved in mitochondrial DNA stability. The protein is IML2-like protein SCY_3392 of Saccharomyces cerevisiae (strain YJM789) (Baker's yeast).